A 266-amino-acid chain; its full sequence is Diphthine synthase (266 aa).

S-adenosyl-L-methionine contacts are provided by residues Leu-9, Asp-84, Val-87, 112 to 113 (SI), Leu-169, Ala-210, and His-235.

Belongs to the diphthine synthase family. As to quaternary structure, homodimer.

It carries out the reaction 2-[(3S)-amino-3-carboxypropyl]-L-histidyl-[translation elongation factor 2] + 3 S-adenosyl-L-methionine = diphthine-[translation elongation factor 2] + 3 S-adenosyl-L-homocysteine + 3 H(+). The protein operates within protein modification; peptidyl-diphthamide biosynthesis. S-adenosyl-L-methionine-dependent methyltransferase that catalyzes the trimethylation of the amino group of the modified target histidine residue in translation elongation factor 2 (EF-2), to form an intermediate called diphthine. The three successive methylation reactions represent the second step of diphthamide biosynthesis. The polypeptide is Diphthine synthase (Methanosarcina barkeri (strain Fusaro / DSM 804)).